A 365-amino-acid chain; its full sequence is tRNA/tmRNA (uracil-C(5))-methyltransferase (365 aa).

Residues Q188, Y216, N221, E237, and D297 each coordinate S-adenosyl-L-methionine. C322 (nucleophile) is an active-site residue. Catalysis depends on E356, which acts as the Proton acceptor.

Belongs to the class I-like SAM-binding methyltransferase superfamily. RNA M5U methyltransferase family. TrmA subfamily.

The catalysed reaction is uridine(54) in tRNA + S-adenosyl-L-methionine = 5-methyluridine(54) in tRNA + S-adenosyl-L-homocysteine + H(+). It carries out the reaction uridine(341) in tmRNA + S-adenosyl-L-methionine = 5-methyluridine(341) in tmRNA + S-adenosyl-L-homocysteine + H(+). Functionally, dual-specificity methyltransferase that catalyzes the formation of 5-methyluridine at position 54 (m5U54) in all tRNAs, and that of position 341 (m5U341) in tmRNA (transfer-mRNA). The polypeptide is tRNA/tmRNA (uracil-C(5))-methyltransferase (Aggregatibacter aphrophilus (strain NJ8700) (Haemophilus aphrophilus)).